Reading from the N-terminus, the 412-residue chain is Argininosuccinate synthase (412 aa).

Residues 10–18 (AYSGGLDTS) and A36 contribute to the ATP site. L-citrulline-binding residues include Y87 and S92. 115–123 (SHGATGKGN) is a binding site for ATP. Residues T119, N123, and D124 each coordinate L-aspartate. N123 contacts L-citrulline. Residues R127, S180, S189, E270, and Y282 each coordinate L-citrulline.

It belongs to the argininosuccinate synthase family. Homotetramer.

The enzyme catalyses L-citrulline + L-aspartate + ATP = 2-(N(omega)-L-arginino)succinate + AMP + diphosphate + H(+). Its pathway is amino-acid biosynthesis; L-arginine biosynthesis; L-arginine from L-ornithine and carbamoyl phosphate: step 2/3. The protein operates within nitrogen metabolism; urea cycle; (N(omega)-L-arginino)succinate from L-aspartate and L-citrulline: step 1/1. The sequence is that of Argininosuccinate synthase from Aedes aegypti (Yellowfever mosquito).